Here is a 78-residue protein sequence, read N- to C-terminus: DNA gyrase inhibitor YacG (78 aa).

Positions 7, 10, 26, and 30 each coordinate Zn(2+).

This sequence belongs to the DNA gyrase inhibitor YacG family. In terms of assembly, interacts with GyrB. Zn(2+) serves as cofactor.

Its function is as follows. Inhibits all the catalytic activities of DNA gyrase by preventing its interaction with DNA. Acts by binding directly to the C-terminal domain of GyrB, which probably disrupts DNA binding by the gyrase. This chain is DNA gyrase inhibitor YacG, found in Shewanella piezotolerans (strain WP3 / JCM 13877).